Consider the following 448-residue polypeptide: Beta-glucosidase A (448 aa).

Glutamate 166 (proton donor) is an active-site residue. Glutamate 352 functions as the Nucleophile in the catalytic mechanism.

Belongs to the glycosyl hydrolase 1 family. In terms of assembly, homooctamer.

The enzyme catalyses Hydrolysis of terminal, non-reducing beta-D-glucosyl residues with release of beta-D-glucose.. BglA is intracellular and cleaves cellobiose probably through inorganic phosphate mediated hydrolysis. The polypeptide is Beta-glucosidase A (bglA) (Paenibacillus polymyxa (Bacillus polymyxa)).